A 312-amino-acid chain; its full sequence is Serine/threonine-protein phosphatase CPPED1 (312 aa).

Residue Ser2 is modified to Phosphoserine. Residues 47–250 are catalytic; it reads KAWSTGNCDA…AVFSGHYHRN (204 aa). Residues Asp90, Asn127, and His246 each coordinate a divalent metal cation. At Ser293 the chain carries Phosphoserine.

The protein belongs to the metallophosphoesterase superfamily. CPPED1 family. Requires a divalent metal cation as cofactor.

The protein localises to the cytoplasm. The enzyme catalyses O-phospho-L-seryl-[protein] + H2O = L-seryl-[protein] + phosphate. It catalyses the reaction O-phospho-L-threonyl-[protein] + H2O = L-threonyl-[protein] + phosphate. In terms of biological role, protein phosphatase that dephosphorylates AKT family kinase specifically at 'Ser-473', blocking cell cycle progression and promoting cell apoptosis. May play an inhibitory role in glucose uptake by adipocytes. This is Serine/threonine-protein phosphatase CPPED1 (Cpped1) from Mus musculus (Mouse).